The chain runs to 475 residues: Membrane-bound lytic murein transglycosylase F (475 aa).

Positions 1–30 (MKKLKINYLFIGILTLLLAAALWPSIPWFG) are cleaved as a signal peptide. The tract at residues 31–269 (KTENHIAAIQ…RIEEKYLGHG (239 aa)) is non-LT domain. The LT domain stretch occupies residues 270–475 (DDFDYVDTRS…MKLAQDYPAV (206 aa)). Glu-314 is an active-site residue.

In the N-terminal section; belongs to the bacterial solute-binding protein 3 family. This sequence in the C-terminal section; belongs to the transglycosylase Slt family.

It is found in the cell outer membrane. The catalysed reaction is Exolytic cleavage of the (1-&gt;4)-beta-glycosidic linkage between N-acetylmuramic acid (MurNAc) and N-acetylglucosamine (GlcNAc) residues in peptidoglycan, from either the reducing or the non-reducing ends of the peptidoglycan chains, with concomitant formation of a 1,6-anhydrobond in the MurNAc residue.. Murein-degrading enzyme that degrades murein glycan strands and insoluble, high-molecular weight murein sacculi, with the concomitant formation of a 1,6-anhydromuramoyl product. Lytic transglycosylases (LTs) play an integral role in the metabolism of the peptidoglycan (PG) sacculus. Their lytic action creates space within the PG sacculus to allow for its expansion as well as for the insertion of various structures such as secretion systems and flagella. This chain is Membrane-bound lytic murein transglycosylase F, found in Salmonella typhi.